The following is a 191-amino-acid chain: Probable GTP-binding protein EngB (191 aa).

Positions 13-189 (DRLEVAFAGR…RAEIVALLPD (177 aa)) constitute an EngB-type G domain. GTP-binding positions include 21–28 (GRSNVGKS), 48–52 (GRTRE), 67–70 (DLPG), 134–137 (TKTD), and 168–170 (TSS). Mg(2+)-binding residues include serine 28 and threonine 50.

The protein belongs to the TRAFAC class TrmE-Era-EngA-EngB-Septin-like GTPase superfamily. EngB GTPase family. It depends on Mg(2+) as a cofactor.

Necessary for normal cell division and for the maintenance of normal septation. The protein is Probable GTP-binding protein EngB of Maricaulis maris (strain MCS10) (Caulobacter maris).